The chain runs to 622 residues: 1-deoxy-D-xylulose-5-phosphate synthase (622 aa).

Thiamine diphosphate contacts are provided by residues His74 and 115 to 117 (GHS). Residue Asp146 coordinates Mg(2+). Residues 147–148 (GA), Asn177, Phe285, and Glu366 each bind thiamine diphosphate. Asn177 is a Mg(2+) binding site.

Belongs to the transketolase family. DXPS subfamily. As to quaternary structure, homodimer. Requires Mg(2+) as cofactor. It depends on thiamine diphosphate as a cofactor.

The enzyme catalyses D-glyceraldehyde 3-phosphate + pyruvate + H(+) = 1-deoxy-D-xylulose 5-phosphate + CO2. It participates in metabolic intermediate biosynthesis; 1-deoxy-D-xylulose 5-phosphate biosynthesis; 1-deoxy-D-xylulose 5-phosphate from D-glyceraldehyde 3-phosphate and pyruvate: step 1/1. Functionally, catalyzes the acyloin condensation reaction between C atoms 2 and 3 of pyruvate and glyceraldehyde 3-phosphate to yield 1-deoxy-D-xylulose-5-phosphate (DXP). The chain is 1-deoxy-D-xylulose-5-phosphate synthase from Magnetococcus marinus (strain ATCC BAA-1437 / JCM 17883 / MC-1).